We begin with the raw amino-acid sequence, 313 residues long: D-alanine--D-alanine ligase (313 aa).

The ATP-grasp domain occupies 111–306 (KQVWHSLGLP…FQQLVLAILA (196 aa)). 137-192 (AAELGFPLIVKPAHEGSSIGMAKVESVEALIAAWQDAARYDSQVLVEQWIAGPEYT) lines the ATP pocket. 3 residues coordinate Mg(2+): D260, E273, and N275.

Belongs to the D-alanine--D-alanine ligase family. It depends on Mg(2+) as a cofactor. Mn(2+) serves as cofactor.

The protein localises to the cytoplasm. It catalyses the reaction 2 D-alanine + ATP = D-alanyl-D-alanine + ADP + phosphate + H(+). It participates in cell wall biogenesis; peptidoglycan biosynthesis. Functionally, cell wall formation. This chain is D-alanine--D-alanine ligase, found in Ectopseudomonas mendocina (strain ymp) (Pseudomonas mendocina).